The primary structure comprises 265 residues: MTPLRILISNDDGVFADGIRTLAAAAAAAGHQVTVVCPDQERSATGHGLTLQTPIRAERADELFEPGIKAWACSGTPADCMKLALFELLPEKPDLVLSGINHGPNLGTDVFCSGTVAAAMEGTLEGLPAMAVSSACFQWREFQAAAHLAIQVAEAALADQWPENLLLNLNVPPCKQEAMGKLSWTRLSIRRYDEQFSPRVDPRGRTYYWLAGEAVEDFESGGDGPRDWPTDVAQIQADAPSLTPIQPELFWRGGLSSLPQLNIDQ.

Aspartate 11, aspartate 12, serine 43, and asparagine 101 together coordinate a divalent metal cation.

It belongs to the SurE nucleotidase family. A divalent metal cation serves as cofactor.

The protein localises to the cytoplasm. It catalyses the reaction a ribonucleoside 5'-phosphate + H2O = a ribonucleoside + phosphate. Nucleotidase that shows phosphatase activity on nucleoside 5'-monophosphates. In Synechococcus sp. (strain CC9311), this protein is 5'-nucleotidase SurE.